The sequence spans 311 residues: Aspartate carbamoyltransferase catalytic subunit (311 aa).

Carbamoyl phosphate-binding residues include Arg59 and Thr60. Lys87 provides a ligand contact to L-aspartate. The carbamoyl phosphate site is built by Arg109, His139, and Gln142. L-aspartate contacts are provided by Arg172 and Arg224. Carbamoyl phosphate is bound by residues Ala265 and Pro266.

It belongs to the aspartate/ornithine carbamoyltransferase superfamily. ATCase family. In terms of assembly, heterododecamer (2C3:3R2) of six catalytic PyrB chains organized as two trimers (C3), and six regulatory PyrI chains organized as three dimers (R2).

The catalysed reaction is carbamoyl phosphate + L-aspartate = N-carbamoyl-L-aspartate + phosphate + H(+). The protein operates within pyrimidine metabolism; UMP biosynthesis via de novo pathway; (S)-dihydroorotate from bicarbonate: step 2/3. In terms of biological role, catalyzes the condensation of carbamoyl phosphate and aspartate to form carbamoyl aspartate and inorganic phosphate, the committed step in the de novo pyrimidine nucleotide biosynthesis pathway. The sequence is that of Aspartate carbamoyltransferase catalytic subunit from Streptococcus equi subsp. equi (strain 4047).